We begin with the raw amino-acid sequence, 223 residues long: Neurotrophic factor BDNF precursor form (223 aa).

The N-terminal stretch at 1–5 (SCMKA) is a signal peptide. Positions 6 to 114 (APMKEVSIRG…AANMSMRVRR (109 aa)) are excised as a propeptide. A glycan (N-linked (GlcNAc...) asparagine) is linked at asparagine 107. Cystine bridges form between cysteine 127/cysteine 194 and cysteine 172/cysteine 223.

This sequence belongs to the NGF-beta family.

Its subcellular location is the secreted. Functionally, promotes the survival of neuronal populations that are all located either in the central nervous system or directly connected to it. The sequence is that of Neurotrophic factor BDNF precursor form (BDNF) from Eryx colubrinus colubrinus.